The primary structure comprises 125 residues: Small ribosomal subunit protein uS12m (125 aa).

Positions 1-27 (MPTKNQLIRHGREEKRRTDRTRALDQC) are disordered. Residues 10-23 (HGREEKRRTDRTRA) show a composition bias toward basic and acidic residues.

Belongs to the universal ribosomal protein uS12 family.

It localises to the mitochondrion. Functionally, protein S12 is involved in the translation initiation step. The chain is Small ribosomal subunit protein uS12m (RPS12) from Triticum aestivum (Wheat).